The chain runs to 152 residues: Superoxide dismutase [Cu-Zn] (152 aa).

Positions 44, 46, and 61 each coordinate Cu cation. Zn(2+) contacts are provided by His-61, His-69, His-78, and Asp-81. His-118 is a Cu cation binding site.

The protein belongs to the Cu-Zn superoxide dismutase family. As to quaternary structure, homodimer. Requires Cu cation as cofactor. It depends on Zn(2+) as a cofactor.

It is found in the cytoplasm. The catalysed reaction is 2 superoxide + 2 H(+) = H2O2 + O2. Destroys radicals which are normally produced within the cells and which are toxic to biological systems. The protein is Superoxide dismutase [Cu-Zn] of Drosophila pseudoobscura pseudoobscura (Fruit fly).